A 467-amino-acid polypeptide reads, in one-letter code: Putative sulfoquinovose importer (467 aa).

12 helical membrane passes run 17 to 37, 54 to 74, 88 to 108, 121 to 141, 160 to 180, 185 to 205, 238 to 258, 275 to 295, 303 to 323, 325 to 345, 379 to 399, and 414 to 434; these read IAYGMGDVGSNLMLCIGTLYL, IIFLVAKFFTAFTDMLTGFLL, PFILYAAVPAALIATLQFIAT, ALFMMFGLSYSLMNCSYGAMI, GGATIGLLICTVAFIPLQSLF, VGYACAALMFSIGGFIFMMLC, LLVLCIANLCTLAAFNIKLAI, WMGFFSMGCILIGVLLVPLTV, VYLAGMVLWAVGDILNYFWGS, SFTFVMFSCVAFFGTAFVNSL, ISAALAGFLPGIMLTQIGYVP, and LIFIWPCALAIIAALTMGFFY.

Belongs to the sodium:galactoside symporter (TC 2.A.2) family.

Its subcellular location is the cell inner membrane. In terms of biological role, could be involved in sulfoquinovose import. This Escherichia coli (strain K12) protein is Putative sulfoquinovose importer (yihO).